The primary structure comprises 156 residues: MARKRKTPTRDVLADPVFNSKIITKLINTIMLDGKKSVAESILYNAFAIIKNKTNKEPIEVFTVAIENISPQLEVRSRRVGGSNYQVPCEVSAKRKQTLALRWLIQYARLRNEKTMEEKLAGEIIDASNKMGGAIKKREDTYKMAESNKAFAHFRW.

The protein belongs to the universal ribosomal protein uS7 family. Part of the 30S ribosomal subunit. Contacts proteins S9 and S11.

Its function is as follows. One of the primary rRNA binding proteins, it binds directly to 16S rRNA where it nucleates assembly of the head domain of the 30S subunit. Is located at the subunit interface close to the decoding center, probably blocks exit of the E-site tRNA. The chain is Small ribosomal subunit protein uS7 from Metamycoplasma arthritidis (strain 158L3-1) (Mycoplasma arthritidis).